Here is a 1666-residue protein sequence, read N- to C-terminus: Complement C3 (1666 aa).

A signal peptide spans 1-22; it reads MGPAAGPSLLLLLLASVSLALG. 3 positions are modified to phosphoserine: serine 70, serine 296, and serine 302. Disulfide bonds link cysteine 557-cysteine 821, cysteine 630-cysteine 666, cysteine 698-cysteine 725, cysteine 699-cysteine 732, cysteine 712-cysteine 733, cysteine 878-cysteine 1517, cysteine 1106-cysteine 1163, cysteine 1363-cysteine 1493, cysteine 1394-cysteine 1462, cysteine 1510-cysteine 1515, cysteine 1522-cysteine 1593, cysteine 1540-cysteine 1664, and cysteine 1640-cysteine 1649. Residue serine 676 is modified to Phosphoserine. In terms of domain architecture, Anaphylatoxin-like spans 698-733; that stretch reads CCEDGMRENPMQFSCQRRARYVSLGEACVKAFLDCC. Residue asparagine 944 is glycosylated (N-linked (GlcNAc...) asparagine). Position 973 is a phosphoserine (serine 973). The isoglutamyl cysteine thioester (Cys-Gln) cross-link spans 1015–1018; it reads CGEQ. Serine 1326 bears the Phosphoserine mark. The NTR domain maps to 1522 to 1664; sequence CFIQLPEKIT…FTENMVVFGC (143 aa). The residue at position 1576 (serine 1576) is a Phosphoserine. The N-linked (GlcNAc...) asparagine glycan is linked to asparagine 1620. Positions 1637–1662 are interaction with CFP/properdin; it reads AEECQDEENQQQCQDLGTFTENMVVF.

In terms of assembly, in absence of complement activation, the C3 precursor is first processed by the removal of 4 Arg residues, forming two chains, beta and alpha, linked by a disulfide bond. As to quaternary structure, complement C3b is composed of complement C3b and complement C3 beta chains that are associated via disulfide bonds. Non-enzymatic component of the C5 convertase, also named C4bC2bC3b, composed of the serine protease complement C2b (C2), complement C3b, as well as complement C4b (C4). Non-enzymatic component of the C5 convertase of the alternative complement pathways composed of the serine protease complement CFB and complement C3b. Interacts with CFP; interaction takes place together with CFB in the alternative complement system and allows the complex to become active. Interacts with CR1 (via Sushi 8 and Sushi 9 domains). Interacts with CFH. Interacts with CFH. Interacts with CR2. In terms of assembly, during pregnancy, C3dg exists as a complex (probably a 2:2:2 heterohexamer) with AGT and the proform of PRG2. Interacts with CR2 (via the N-terminal Sushi domains 1 and 2). C3 precursor is first processed by the removal of 4 Arg residues, forming two chains, beta and alpha, linked by a disulfide bond. During activation of the complement systems, the alpha chain is cleaved into C3a and C3b by the C3 convertase: C3b stays linked to the beta chain, while C3a is released in the plasma. The alpha chain is cleaved by the serine protease complement C2b component of the C3 convertase to generate C3a and C3b following activation by the classical, lectin and GZMK complement systems. The alpha chain is cleaved by CFB component of the C3 convertase to generate C3a and C3b following activation by the alternative complement system. In terms of processing, C3a is further processed by carboxypeptidases to release the C-terminal arginine residue generating the acylation stimulating protein (ASP). Levels of ASP are increased in adipocytes in the postprandial period and by insulin and dietary chylomicrons. Post-translationally, complement C3b is rapidly split in two positions by factor I (CFI) and a cofactor (CFH) to form iC3b (inactivated C3b) and C3f which is released. CFI and CFH catalyze proteolytic degradation of already-deposited complement C3b. Then iC3b is slowly cleaved (possibly by CFI) to form C3c (beta chain + alpha' chain fragment 1 + alpha' chain fragment 2), C3dg and C3f. Other proteases produce other fragments such as C3d or C3g. Upon activation, the internal thioester bond reacts with carbohydrate antigens on the target surface to form amide or ester bonds, leading to covalent association with the surface of pathogens. In terms of processing, complement C3b interacts with complement C4b via a thioester linkage. Post-translationally, phosphorylated by FAM20C in the extracellular medium.

It localises to the secreted. It is found in the cell surface. With respect to regulation, complement activation is inhibited by VSIG4. In terms of biological role, precursor of non-enzymatic components of the classical, alternative, lectin and GZMK complement pathways, which consist in a cascade of proteins that leads to phagocytosis and breakdown of pathogens and signaling that strengthens the adaptive immune system. Functionally, non-enzymatic component of C5 convertase. Generated following cleavage by C3 convertase, it covalently attaches to the surface of pathogens, where it acts as an opsonin that marks the surface of antigens for removal. Complement C3b binds covalently via its reactive thioester, to cell surface carbohydrates or immune aggregates. Together with complement C4b, it then recruits the serine protease complement C2b to form the C5 convertase, which cleaves and activate C5, the next component of the complement pathways. In the alternative complement pathway, recruits the serine protease CFB to form the C5 convertase that cleaves and activates C5. Mediator of local inflammatory process released following cleavage by C3 convertase. Acts by binding to its receptor, C3AR1, activating G protein-coupled receptor signaling, promoting the phosphorylation, ARRB2-mediated internalization and endocytosis of C3AR1. C3a anaphylatoxin stimulates the activation of immune cells such as mast cells and basophilic leukocytes to release inflammation agents, such as cytokines, chemokines and histamine, which promote inflammation development. Also acts as potent chemoattractant for the migration of macrophages and neutrophils to the inflamed tissues, resulting in neutralization of the inflammatory triggers by multiple ways, such as phagocytosis and generation of reactive oxidants. Its function is as follows. Adipogenic hormone that stimulates triglyceride synthesis and glucose transport in adipocytes, regulating fat storage and playing a role in postprandial triglyceride clearance. Appears to stimulate triglyceride synthesis via activation of the PLC, MAPK and AKT signaling pathways. Acts by binding to its receptor, C5AR2, activating G protein-coupled receptor signaling, promoting the phosphorylation, ARRB2-mediated internalization and endocytosis of C5AR2. In terms of biological role, acts as a chemoattractant for neutrophils in chronic inflammation. This chain is Complement C3, found in Cavia porcellus (Guinea pig).